The chain runs to 326 residues: Ras association domain-containing protein 2 (326 aa).

The region spanning 176 to 264 (YNHKTSVFTP…SKVFLMEKDQ (89 aa)) is the Ras-associating domain. Residues 272-319 (VAQYIKFEMPVLKSFIQKLQEEEDREVEKLMRKYTVLRLMIRQRLEEI) form the SARAH domain.

Interacts directly with activated KRAS in a GTP-dependent manner. Interacts (via SARAH domain) with STK3/MST2 and STK4/MST1. Phosphorylated by STK3/MST2 and STK4/MST1.

It localises to the nucleus. The protein resides in the cytoplasm. The protein localises to the chromosome. Its subcellular location is the centromere. It is found in the kinetochore. Functionally, potential tumor suppressor. Acts as a KRAS-specific effector protein. May promote apoptosis and cell cycle arrest. Stabilizes STK3/MST2 by protecting it from proteasomal degradation. The protein is Ras association domain-containing protein 2 (Rassf2) of Mus musculus (Mouse).